A 256-amino-acid chain; its full sequence is MSNVDESQPLITHLVELRNRLLRCVICVVLVFVALVYFSNDIYHFVAAPLTAVMPKGATMIATNIQTPFFTPIKLTAIVAIFISVPYLLYQIWAFIAPALYQHEKRMIYPLLFSSTILFYCGVAFAYYIVFPLVFSFFTQTAPEGVTIATDISSYLDFALALFLAFGVCFEVPIAIILLCWTGITTVKALSEKRPYIIVAAFFIGMLLTPPDVFSQTLLAIPMCLLFELGLLVARFYQPKDDESAVKNNDESEKTQ.

6 helical membrane-spanning segments follow: residues 25–45 (VICV…IYHF), 77–97 (AIVA…AFIA), 117–137 (ILFY…VFSF), 158–178 (FALA…AIIL), 195–215 (PYII…DVFS), and 217–237 (TLLA…ARFY).

This sequence belongs to the TatC family. The Tat system comprises two distinct complexes: a TatABC complex, containing multiple copies of TatA, TatB and TatC subunits, and a separate TatA complex, containing only TatA subunits. Substrates initially bind to the TatABC complex, which probably triggers association of the separate TatA complex to form the active translocon.

Its subcellular location is the cell inner membrane. In terms of biological role, part of the twin-arginine translocation (Tat) system that transports large folded proteins containing a characteristic twin-arginine motif in their signal peptide across membranes. Together with TatB, TatC is part of a receptor directly interacting with Tat signal peptides. The chain is Sec-independent protein translocase protein TatC from Haemophilus influenzae (strain ATCC 51907 / DSM 11121 / KW20 / Rd).